Reading from the N-terminus, the 374-residue chain is MSKKDYYKLLGVDRNASTDEIKKAYKKLALKYHPDRNPGNKEAEEKFKEITAAYEVLSDSEKRAGYDRYGHEGASGGFDFSQGFGSAGDFSDIFNDFFGGEFGSSSRSKAKRSTTGVPGADLRYDLEITLEDAFKGIQAPIHYVTNVKCDMCQGRGSEGATKPVQCHTCQGSGRIRTQQGFFTIERTCTTCYGEGEIIQNKCKKCNGSGRRRDEVNISVSIPKGIEEGAKVRVSGKGEAGAKGGKSGDLYVYVKITPHKIFTRNKADLHCKVPIRMTLAVLGGEIDVQSIDGAKIKVKVPEGTQTSTKLRCKEKGMPYMNSYARGDLYVQIIVETLNPNNLTKKQIELLKALEEEENASIQQQSEGFFSKVKKK.

Residues 5 to 70 form the J domain; it reads DYYKLLGVDR…EKRAGYDRYG (66 aa). The CR-type zinc-finger motif lies at 136 to 214; sequence GIQAPIHYVT…CNGSGRRRDE (79 aa). Positions 149, 152, 166, 169, 188, 191, 202, and 205 each coordinate Zn(2+). 4 CXXCXGXG motif repeats span residues 149 to 156, 166 to 173, 188 to 195, and 202 to 209; these read CDMCQGRG, CHTCQGSG, CTTCYGEG, and CKKCNGSG.

This sequence belongs to the DnaJ family. In terms of assembly, homodimer. Zn(2+) serves as cofactor.

It is found in the cytoplasm. Participates actively in the response to hyperosmotic and heat shock by preventing the aggregation of stress-denatured proteins and by disaggregating proteins, also in an autonomous, DnaK-independent fashion. Unfolded proteins bind initially to DnaJ; upon interaction with the DnaJ-bound protein, DnaK hydrolyzes its bound ATP, resulting in the formation of a stable complex. GrpE releases ADP from DnaK; ATP binding to DnaK triggers the release of the substrate protein, thus completing the reaction cycle. Several rounds of ATP-dependent interactions between DnaJ, DnaK and GrpE are required for fully efficient folding. Also involved, together with DnaK and GrpE, in the DNA replication of plasmids through activation of initiation proteins. In Wolbachia sp. subsp. Brugia malayi (strain TRS), this protein is Chaperone protein DnaJ.